A 119-amino-acid chain; its full sequence is NADH-quinone oxidoreductase subunit A (119 aa).

Helical transmembrane passes span 7 to 27, 63 to 83, and 88 to 108; these read FPVL…MSIG, LIAI…PWGV, and IGWP…VGFV.

It belongs to the complex I subunit 3 family. NDH-1 is composed of 14 different subunits. Subunits NuoA, H, J, K, L, M, N constitute the membrane sector of the complex.

The protein resides in the cell inner membrane. The catalysed reaction is a quinone + NADH + 5 H(+)(in) = a quinol + NAD(+) + 4 H(+)(out). In terms of biological role, NDH-1 shuttles electrons from NADH, via FMN and iron-sulfur (Fe-S) centers, to quinones in the respiratory chain. The immediate electron acceptor for the enzyme in this species is believed to be ubiquinone. Couples the redox reaction to proton translocation (for every two electrons transferred, four hydrogen ions are translocated across the cytoplasmic membrane), and thus conserves the redox energy in a proton gradient. The chain is NADH-quinone oxidoreductase subunit A from Cupriavidus pinatubonensis (strain JMP 134 / LMG 1197) (Cupriavidus necator (strain JMP 134)).